Here is a 387-residue protein sequence, read N- to C-terminus: MGCAYSCCLEVCCGEDEIVYPRMPGESTVCHREREKPITYHWYHWHPGHIYPRVASMEDYDEDLVQEASSEDVLGVHMVDKDTERDIEMKRQLRRLRELHLYSTWKKYQEAMKTSLGVPQCERDEGSLGKPLCPPEILSETLPGSVKKRVCFPSEDHLEEFIAEHLPEASNQSLLTVAHADTGIQTNGDLEDLEEHGPGQTVSEEATEVHMMEGDPDTLAELLIRDVLQELSSYNGEEEDPEEVKTSLGVPQRGDLEDLEEHVPGQTVSEEATGVHMMQVDPATPAKSDLEDLEEHVPGQTVSEEATGVHMMQVDPATLAKQLEDSTITGSHQQMSASPSSAPAEEATEKTKVEEEVKTRKPKKKTRKPSKKSRWNVLKCWDIFNIF.

2 disordered regions span residues 233–256 and 327–374; these read SYNG…RGDL and TITG…KKSR. A compositionally biased stretch (low complexity) spans 336–345; it reads SASPSSAPAE. Basic and acidic residues predominate over residues 347-359; sequence ATEKTKVEEEVKT. Residues 360 to 374 are compositionally biased toward basic residues; the sequence is RKPKKKTRKPSKKSR.

It belongs to the FAM153 family.

In Homo sapiens (Human), this protein is Protein FAM153B (FAM153B).